A 300-amino-acid polypeptide reads, in one-letter code: GTPase Era (300 aa).

The Era-type G domain maps to lysine 4–lysine 173. The G1 stretch occupies residues glycine 12–serine 19. Residue glycine 12–serine 19 coordinates GTP. Positions glutamine 38 to asparagine 42 are G2. Residues aspartate 59–glycine 62 are G3. Residues aspartate 59 to phenylalanine 63 and serine 122 to glutamate 125 each bind GTP. The interval serine 122 to glutamate 125 is G4. The segment at isoleucine 152–alanine 154 is G5. The KH type-2 domain maps to leucine 204–asparagine 282.

Belongs to the TRAFAC class TrmE-Era-EngA-EngB-Septin-like GTPase superfamily. Era GTPase family. As to quaternary structure, monomer.

It localises to the cytoplasm. Its subcellular location is the cell membrane. An essential GTPase that binds both GDP and GTP, with rapid nucleotide exchange. Plays a role in 16S rRNA processing and 30S ribosomal subunit biogenesis and possibly also in cell cycle regulation and energy metabolism. The chain is GTPase Era from Ureaplasma parvum serovar 3 (strain ATCC 27815 / 27 / NCTC 11736).